The chain runs to 128 residues: UPF0325 protein YaeH (128 aa).

The protein belongs to the UPF0325 family.

The protein is UPF0325 protein YaeH of Salmonella agona (strain SL483).